The sequence spans 555 residues: Membrane protein insertase YidC (555 aa).

Residues Ile-7–Gln-24 traverse the membrane as a helical segment. The tract at residues Thr-61–Thr-81 is disordered. Helical transmembrane passes span Gly-341 to Leu-361, Trp-364 to Ala-384, Leu-430 to Leu-450, Leu-468 to Gln-488, and Val-503 to Val-523.

This sequence belongs to the OXA1/ALB3/YidC family. Type 1 subfamily. In terms of assembly, interacts with the Sec translocase complex via SecD. Specifically interacts with transmembrane segments of nascent integral membrane proteins during membrane integration.

The protein localises to the cell inner membrane. Required for the insertion and/or proper folding and/or complex formation of integral membrane proteins into the membrane. Involved in integration of membrane proteins that insert both dependently and independently of the Sec translocase complex, as well as at least some lipoproteins. Aids folding of multispanning membrane proteins. The sequence is that of Membrane protein insertase YidC from Cupriavidus pinatubonensis (strain JMP 134 / LMG 1197) (Cupriavidus necator (strain JMP 134)).